The chain runs to 366 residues: Probable trehalose-phosphate phosphatase 3 (366 aa).

It belongs to the trehalose phosphatase family. A divalent metal cation serves as cofactor.

The enzyme catalyses alpha,alpha-trehalose 6-phosphate + H2O = alpha,alpha-trehalose + phosphate. Its pathway is glycan biosynthesis; trehalose biosynthesis. In terms of biological role, removes the phosphate from trehalose 6-phosphate to produce free trehalose. Trehalose accumulation in plant may improve abiotic stress tolerance. This chain is Probable trehalose-phosphate phosphatase 3 (TPP3), found in Oryza sativa subsp. japonica (Rice).